The chain runs to 90 residues: Small ribosomal subunit protein bS20 (90 aa).

The span at 1–10 (MANHKSTQKS) shows a compositional bias: polar residues. Positions 1-25 (MANHKSTQKSIRQDQKRNLINKSRK) are disordered.

It belongs to the bacterial ribosomal protein bS20 family.

In terms of biological role, binds directly to 16S ribosomal RNA. In Orientia tsutsugamushi (strain Ikeda) (Rickettsia tsutsugamushi), this protein is Small ribosomal subunit protein bS20.